A 607-amino-acid chain; its full sequence is NAD-dependent protein deacetylase sir-2.1 (607 aa).

The segment at 1–68 (MSRDSGNDSE…SVSSESWQNN (68 aa)) is disordered. Residues 55 to 64 (ESTTSVSSES) show a composition bias toward low complexity. The region spanning 128 to 401 (KLTNYNSLAD…DSIMEQQGKT (274 aa)) is the Deacetylase sirtuin-type domain. Residues 153 to 172 (GAGV…DGIY) and 237 to 240 (QNID) each bind NAD(+). His255 acts as the Proton acceptor in catalysis. Cys263, Cys266, Cys287, and Cys290 together coordinate Zn(2+). NAD(+)-binding positions include 327–329 (GSS), 352–354 (NRE), and Cys369. Residues 426–453 (EKRNDDSSDEPTLKKPRMSVADDSMDSE) form a disordered region.

This sequence belongs to the sirtuin family. Class I subfamily. In terms of assembly, interacts with ftt-2 and par-5. Interacts with daf-16 following heat-shock, which causes daf-16 to accumulate in the nucleus. Interaction with daf-16 is promoted by ftt-2. Interacts with transcriptional coregulator hcf-1. Requires Zn(2+) as cofactor.

Its subcellular location is the nucleus. It localises to the cytoplasm. The catalysed reaction is N(6)-acetyl-L-lysyl-[protein] + NAD(+) + H2O = 2''-O-acetyl-ADP-D-ribose + nicotinamide + L-lysyl-[protein]. NAD-dependent deacetylase. Involved in metabolism, apoptosis, response to oxidative stress, response to DNA damage, and determination of lifespan. Required for a reduction of the 'Lys-16' acetylation of histone H4 (H4K16ac) on dosage-compensated X chromosomes in hermaphrodites. Plays a role in germ cell and somatic cell apoptosis in response to DNA damage. Functions upstream of daf-16/Forkhead box protein O in the Insulin/IGF-1-like signaling (IIS) mediated pathway, promoting daf-16 mediated transcriptional activation and increased lifespan. May also regulate lifespan independently of daf-16 by modulating the transcription of genes involved in the stress response of the endoplasmic reticulum (ER). Functions upstream of transcriptional coregulator hcf-1, perhaps acting independently of the IIS mediated pathway, to modulate lifespan and oxidative stress response. Acts upstream of the nicotinic acid metabolism pathway, which may be linked to the regulation of longevity. Plays a role in ascaroside-mediated longevity and stress resistance. This is NAD-dependent protein deacetylase sir-2.1 from Caenorhabditis elegans.